The following is a 185-amino-acid chain: Ribosome-recycling factor (185 aa).

It belongs to the RRF family.

It is found in the cytoplasm. Responsible for the release of ribosomes from messenger RNA at the termination of protein biosynthesis. May increase the efficiency of translation by recycling ribosomes from one round of translation to another. This is Ribosome-recycling factor from Carboxydothermus hydrogenoformans (strain ATCC BAA-161 / DSM 6008 / Z-2901).